Reading from the N-terminus, the 1683-residue chain is ABC transporter 7 (1683 aa).

The chain crosses the membrane as a helical span at residues 24–44; sequence DYLRILLPAVVIGLSVLNLGF. Residues 53-93 form a disordered region; that stretch reads RSKSPSTHAYAPVSNGDNSRPGAHRTDISPDDDAIAQDDED. Positions 81 to 93 are enriched in acidic residues; that stretch reads SPDDDAIAQDDED. The next 4 helical transmembrane spans lie at 127–147, 157–177, 190–210, and 221–241; these read LSVV…VIAL, TLTG…LATL, HLWN…IGIF, and LAQI…FMAI. An N-linked (GlcNAc...) asparagine glycan is attached at Asn247. Helical transmembrane passes span 336–356 and 368–388; these read GWAV…KAIL and SVVW…SLGD. Residues 338 to 664 enclose the ABC transmembrane type-1 1 domain; that stretch reads AVMSGMFTFA…LGDMLAHVQE (327 aa). The interval 451–473 is disordered; sequence GDNDESEDGKDGDKDKEDSSDEQ. An N-linked (GlcNAc...) asparagine glycan is attached at Asn489. Helical transmembrane passes span 496-516 and 518-538; these read YLHF…VLLY and VLGM…PVNI. N-linked (GlcNAc...) asparagine glycosylation occurs at Asn545. A run of 2 helical transmembrane segments spans residues 602–622 and 632–648; these read VWAC…FFSF and PLHP…FMLL. The ABC transporter 1 domain occupies 700 to 949; sequence IALKDAAFIW…GALGEEIAQK (250 aa). 742-749 contributes to the ATP binding site; sequence GPTGSGKT. Residues 952–998 are disordered; the sequence is SETPNISRIPSRVPSSVGEGSGNTLLDTDGDDHLSKPKNAKKAKKAE. A glycan (N-linked (GlcNAc...) asparagine) is linked at Asn956. The chain crosses the membrane as a helical span at residues 1016-1036; it reads LYLASMGSWWFWVVAGCIFIS. The ABC transmembrane type-1 2 domain maps to 1028-1351; sequence VVAGCIFISQ…NILWLVRLYS (324 aa). N-linked (GlcNAc...) asparagine glycosylation occurs at Asn1097. 3 consecutive transmembrane segments (helical) span residues 1111–1131, 1182–1202, and 1204–1224; these read AQYY…TAFL, VDQE…GITV, and VVLI…ITIA. N-linked (GlcNAc...) asparagine glycosylation occurs at Asn1277. Transmembrane regions (helical) follow at residues 1304–1324 and 1327–1347; these read LLGD…IGVI and GWAG…LWLV. Residues 1392–1649 form the ABC transporter 2 domain; that stretch reads VEFINYTTSY…GEGGSFKSMC (258 aa). 2 N-linked (GlcNAc...) asparagine glycosylation sites follow: Asn1396 and Asn1411. 1426 to 1433 provides a ligand contact to ATP; it reads GRTGAGKS. N-linked (GlcNAc...) asparagine glycosylation is found at Asn1541 and Asn1552.

The protein belongs to the ABC transporter superfamily.

The protein localises to the membrane. Functionally, ABC transporter; part of the gene cluster that mediates the biosynthesis of pyriculol and pyriculariol, two heptaketides that induce lesion formation upon application on rice leaves but are dispensable for pathogenicity. With the MFS transporter MFS1, is most likely responsible for pyriculol and pyriculariol secretion and thereby may contribute to intrinsic resistance. In Pyricularia oryzae (strain 70-15 / ATCC MYA-4617 / FGSC 8958) (Rice blast fungus), this protein is ABC transporter 7.